The sequence spans 296 residues: Myeloid differentiation primary response protein MyD88 (296 aa).

The Death domain occupies arginine 32 to isoleucine 109. The tract at residues glutamate 110–glycine 155 is intermediate domain. The TIR domain occupies glutamate 159 to leucine 293. Residue serine 244 is modified to Phosphoserine.

In terms of assembly, homodimer. Also forms heterodimers with TIRAP. Binds to TLR2, TLR4, IRAK1, IRAK2 and IRAK4 via their respective TIR domains. Interacts with IL18R1. Interacts with BMX, IL1RL1, IKBKE and IRF7. Interacts with LRRFIP1 and LRRFIP2; this interaction positively regulates Toll-like receptor (TLR) signaling in response to agonist. Interacts with FLII. LRRFIP1 and LRRFIP2 compete with FLII for MYD88-binding. Interacts with IRF1. Upon IL1B treatment, forms a complex with PELI1, IRAK1, IRAK4 and TRAF6; this complex recruits MAP3K7/TAK1, TAB1 and TAB2 to mediate NF-kappa-B activation. Direct binding of SMAD6 to PELI1 prevents the complex formation and hence negatively regulates IL1R-TLR signaling and eventually NF-kappa-B-mediated gene expression. May interact with PIK3AP1. Interacts (via TIR domain) with DHX9 (via H2A and OB-fold regions); this interaction is direct. Interacts with OTUD4 deubiquitinase; the interaction is direct. Post-translationally, ubiquitinated; undergoes 'Lys-63'-linked polyubiquitination. OTUD4 specifically hydrolyzes 'Lys-63'-linked polyubiquitinated MYD88. Deubiquitinated by USP3 that cleaves 'Lys-63'-linked ubiquitin chains leading to inhibition of MYD88-induced NF-kappa-B signaling.

It is found in the cytoplasm. It localises to the nucleus. In terms of biological role, adapter protein involved in the Toll-like receptor and IL-1 receptor signaling pathway in the innate immune response. Acts via IRAK1, IRAK2, IRF7 and TRAF6, leading to NF-kappa-B activation, cytokine secretion and the inflammatory response. Increases IL-8 transcription. Involved in IL-18-mediated signaling pathway. Activates IRF1 resulting in its rapid migration into the nucleus to mediate an efficient induction of IFN-beta, NOS2/INOS, and IL12A genes. Upon TLR8 activation by GU-rich single-stranded RNA (GU-rich RNA) derived from viruses, induces IL1B release through NLRP3 inflammasome activation. MyD88-mediated signaling in intestinal epithelial cells is crucial for maintenance of gut homeostasis and controls the expression of the antimicrobial lectin REG3G in the small intestine. This Rattus norvegicus (Rat) protein is Myeloid differentiation primary response protein MyD88 (Myd88).